Consider the following 525-residue polypeptide: GMP synthase [glutamine-hydrolyzing] (525 aa).

The Glutamine amidotransferase type-1 domain maps to 8–206 (PLLILDFGSQ…VVDICKAPTE (199 aa)). The active-site Nucleophile is the Cys-85. Residues His-180 and Glu-182 contribute to the active site. The region spanning 207-400 (WTPEHIIDEA…LGLPHDMVYR (194 aa)) is the GMPS ATP-PPase domain. 234 to 240 (SGGVDSS) lines the ATP pocket.

Homodimer.

The enzyme catalyses XMP + L-glutamine + ATP + H2O = GMP + L-glutamate + AMP + diphosphate + 2 H(+). The protein operates within purine metabolism; GMP biosynthesis; GMP from XMP (L-Gln route): step 1/1. Its function is as follows. Catalyzes the synthesis of GMP from XMP. This Legionella pneumophila (strain Corby) protein is GMP synthase [glutamine-hydrolyzing].